Consider the following 151-residue polypeptide: Arginine repressor (151 aa).

This sequence belongs to the ArgR family.

The protein localises to the cytoplasm. It functions in the pathway amino-acid biosynthesis; L-arginine biosynthesis [regulation]. In terms of biological role, regulates arginine biosynthesis genes. The polypeptide is Arginine repressor (Clostridium novyi (strain NT)).